Here is an 83-residue protein sequence, read N- to C-terminus: Mu-theraphotoxin-Hhn2j 1 (83 aa).

Residues 1–21 (MKASMFLALAGLVLLFVVGYA) form the signal peptide. The propeptide occupies 22 to 48 (SESEEKEFPIELLSKIFAVDVFKGEER). Disulfide bonds link Cys-50/Cys-65, Cys-57/Cys-70, and Cys-64/Cys-77. Leu-81 bears the Leucine amide mark.

Belongs to the neurotoxin 10 (Hwtx-1) family. 15 (Hntx-3) subfamily. As to quaternary structure, monomer. As to expression, expressed by the venom gland.

The protein resides in the secreted. Functionally, lethal neurotoxin. Selectively blocks tetrodotoxin-sensitive voltage-gated sodium channels (Nav). Does not affect tetrodotoxin-resistant voltage-gated sodium channels or calcium channels. The sequence is that of Mu-theraphotoxin-Hhn2j 1 from Cyriopagopus hainanus (Chinese bird spider).